Reading from the N-terminus, the 292-residue chain is Undecaprenyl-diphosphatase 2 (292 aa).

Helical transmembrane passes span 89–109, 118–138, 203–223, 232–252, and 263–283; these read WLVI…QDAI, LIAT…WYAS, FLLA…SIGG, PTIL…AWFL, and FVLY…GGAL.

The protein belongs to the UppP family.

It is found in the cell membrane. It carries out the reaction di-trans,octa-cis-undecaprenyl diphosphate + H2O = di-trans,octa-cis-undecaprenyl phosphate + phosphate + H(+). Its function is as follows. Catalyzes the dephosphorylation of undecaprenyl diphosphate (UPP). Confers resistance to bacitracin. This chain is Undecaprenyl-diphosphatase 2, found in Frankia casuarinae (strain DSM 45818 / CECT 9043 / HFP020203 / CcI3).